Here is a 200-residue protein sequence, read N- to C-terminus: Probable molybdenum cofactor guanylyltransferase (200 aa).

Residues 9–11 (LAG), Lys-21, Asp-69, and Asp-100 contribute to the GTP site. Asp-100 serves as a coordination point for Mg(2+).

This sequence belongs to the MobA family. It depends on Mg(2+) as a cofactor.

Its subcellular location is the cytoplasm. The catalysed reaction is Mo-molybdopterin + GTP + H(+) = Mo-molybdopterin guanine dinucleotide + diphosphate. Its function is as follows. Transfers a GMP moiety from GTP to Mo-molybdopterin (Mo-MPT) cofactor (Moco or molybdenum cofactor) to form Mo-molybdopterin guanine dinucleotide (Mo-MGD) cofactor. The polypeptide is Probable molybdenum cofactor guanylyltransferase (Bacillus anthracis (strain CDC 684 / NRRL 3495)).